A 301-amino-acid chain; its full sequence is Protoheme IX farnesyltransferase (301 aa).

9 consecutive transmembrane segments (helical) span residues 9-29 (VLAY…VATI), 42-62 (IALI…ANSL), 89-109 (TSHA…WLWW), 113-133 (LLAG…YTMV), 142-162 (VVWG…AVTG), 168-188 (PIVL…ALAM), 211-231 (VTKQ…TLVP), 232-252 (AAGV…LLMA), and 280-300 (VVFV…GSLL).

The protein belongs to the UbiA prenyltransferase family. Protoheme IX farnesyltransferase subfamily.

The protein resides in the cell membrane. It carries out the reaction heme b + (2E,6E)-farnesyl diphosphate + H2O = Fe(II)-heme o + diphosphate. The protein operates within porphyrin-containing compound metabolism; heme O biosynthesis; heme O from protoheme: step 1/1. In terms of biological role, converts heme B (protoheme IX) to heme O by substitution of the vinyl group on carbon 2 of heme B porphyrin ring with a hydroxyethyl farnesyl side group. The protein is Protoheme IX farnesyltransferase of Rhodococcus jostii (strain RHA1).